The chain runs to 130 residues: Small ribosomal subunit protein uS11c (130 aa).

It belongs to the universal ribosomal protein uS11 family. In terms of assembly, part of the 30S ribosomal subunit.

Its subcellular location is the plastid. It is found in the chloroplast. In Angiopteris evecta (Mule's foot fern), this protein is Small ribosomal subunit protein uS11c.